The primary structure comprises 327 residues: Selenate reductase subunit beta (327 aa).

3 4Fe-4S ferredoxin-type domains span residues 6–35 (LAYV…RDGR), 124–155 (NHYF…KREE), and 157–186 (GLVV…FNLQ). 7 residues coordinate [4Fe-4S] cluster: C15, C18, C21, C25, C133, C136, and C141. [3Fe-4S] cluster-binding residues include C145, C166, and C172. Residues C176, C193, C196, C208, and C212 each coordinate [4Fe-4S] cluster.

Heterotrimer of alpha (SerA), beta (SerB) and gamma (SerC) subunits. It depends on [3Fe-4S] cluster as a cofactor. The cofactor is [4Fe-4S] cluster.

The protein resides in the periplasm. It carries out the reaction selenite + 2 Fe(III)-[cytochrome c] + H2O = 2 Fe(II)-[cytochrome] + selenate + 2 H(+). With respect to regulation, enzyme isolated from cells grown in a tungstate rich environment shows a 20-fold reduction in selenate reductase activity. Component of the selenate reductase, which catalyzes the reduction of selenate to selenite and allows anaerobic growth with selenate as the sole terminal electron acceptor. A c-type di-heme cytochrome of the cytc4 family was shown to donate electrons to the selenate reductase in vitro. SerABC can also use reduced benzyl viologen or reduced methyl viologen as an electron donor. This subunit transfers electrons from SerC to SerA. The reductase is specific for selenate, and cannot reduce nitrate, nitrite, chlorate or sulfate. In Thauera selenatis, this protein is Selenate reductase subunit beta.